The following is a 149-amino-acid chain: Large ribosomal subunit protein uL13 (149 aa).

It belongs to the universal ribosomal protein uL13 family. As to quaternary structure, part of the 50S ribosomal subunit.

This protein is one of the early assembly proteins of the 50S ribosomal subunit, although it is not seen to bind rRNA by itself. It is important during the early stages of 50S assembly. The sequence is that of Large ribosomal subunit protein uL13 from Chlorobium phaeovibrioides (strain DSM 265 / 1930) (Prosthecochloris vibrioformis (strain DSM 265)).